The primary structure comprises 323 residues: Dehydrogenase/reductase SDR family member 7B (323 aa).

The Cytoplasmic portion of the chain corresponds to 1 to 17 (MISPSFRKGMLKERVMD). The helical; Signal-anchor for type II membrane protein transmembrane segment at 18 to 38 (LASQTTILPLLFGCLGIFSLF) threads the bilayer. Over 39 to 323 (RLLQRIRSKA…ARKERKSKSS (285 aa)) the chain is Lumenal. S62 and L64 together coordinate NAD(+). S192 serves as a coordination point for substrate. Positions 205, 209, and 240 each coordinate NAD(+). Y205 functions as the Proton acceptor in the catalytic mechanism.

Belongs to the short-chain dehydrogenases/reductases (SDR) family.

Its subcellular location is the endoplasmic reticulum membrane. In terms of biological role, putative oxidoreductase. The polypeptide is Dehydrogenase/reductase SDR family member 7B (Mus musculus (Mouse)).